Reading from the N-terminus, the 313-residue chain is Porphobilinogen deaminase (313 aa).

An S-(dipyrrolylmethanemethyl)cysteine modification is found at cysteine 242.

This sequence belongs to the HMBS family. As to quaternary structure, monomer. The cofactor is dipyrromethane.

The catalysed reaction is 4 porphobilinogen + H2O = hydroxymethylbilane + 4 NH4(+). It participates in porphyrin-containing compound metabolism; protoporphyrin-IX biosynthesis; coproporphyrinogen-III from 5-aminolevulinate: step 2/4. Its function is as follows. Tetrapolymerization of the monopyrrole PBG into the hydroxymethylbilane pre-uroporphyrinogen in several discrete steps. In Erwinia tasmaniensis (strain DSM 17950 / CFBP 7177 / CIP 109463 / NCPPB 4357 / Et1/99), this protein is Porphobilinogen deaminase.